The chain runs to 144 residues: Apidaecins type 22 (144 aa).

The signal sequence occupies residues 1 to 19; it reads MKNFALAILVVTFVVAVFG. 4 propeptides span residues 20–42, 63–70, 91–98, and 119–126; these read NTNLDPPTRPTRLRREAEPEAEP and EAEPEAEP. Residues 20–144 are disordered; that stretch reads NTNLDPPTRP…PQPRPPHPRI (125 aa). Positions 134 to 144 are enriched in pro residues; it reads IPQPRPPHPRI.

The protein belongs to the apidaecin family.

The protein resides in the secreted. In terms of biological role, apidaecins have bactericidal activity; predominantly against Gram-negative bacteria. They seem to interfere with cell propagation. The polypeptide is Apidaecins type 22 (Apis mellifera (Honeybee)).